A 704-amino-acid polypeptide reads, in one-letter code: Elongation factor G (704 aa).

The region spanning Asp-8 to Val-291 is the tr-type G domain. Residues Ala-17–Thr-24, Asp-90–His-94, and Asn-144–Asp-147 contribute to the GTP site.

The protein belongs to the TRAFAC class translation factor GTPase superfamily. Classic translation factor GTPase family. EF-G/EF-2 subfamily.

The protein localises to the cytoplasm. Its function is as follows. Catalyzes the GTP-dependent ribosomal translocation step during translation elongation. During this step, the ribosome changes from the pre-translocational (PRE) to the post-translocational (POST) state as the newly formed A-site-bound peptidyl-tRNA and P-site-bound deacylated tRNA move to the P and E sites, respectively. Catalyzes the coordinated movement of the two tRNA molecules, the mRNA and conformational changes in the ribosome. The chain is Elongation factor G from Chlorobium chlorochromatii (strain CaD3).